Consider the following 380-residue polypeptide: Acyl-lipid (9+3)-(E)-desaturase (380 aa).

A disordered region spans residues 1–25 (MGAGGCISVSETKPNQKNSLERAPY). Positions 9 to 18 (VSETKPNQKN) are enriched in polar residues. 2 helical membrane-spanning segments follow: residues 52-72 (LSYV…TTYF) and 81-101 (ALAW…VWVI). Residues 103 to 107 (HECGH) carry the Histidine box-1 motif. The Histidine box-2 motif lies at 139–143 (HRRHH). The next 3 helical transmembrane spans lie at 177 to 197 (IGVL…FNVS), 223 to 243 (IYLS…AAMV), and 247 to 267 (VWLI…LVLV). The Histidine box-3 motif lies at 313-317 (HIVHH).

Belongs to the fatty acid desaturase type 1 family.

The protein localises to the membrane. The catalysed reaction is a (9Z)-octadecenoyl-containing glycerolipid + 2 Fe(II)-[cytochrome b5] + O2 + 2 H(+) = a (9Z,12E)-octadecadienoyl-containing glycerolipid + 2 Fe(III)-[cytochrome b5] + 2 H2O. It catalyses the reaction a (9Z)-hexadecenoyl-containing glycerolipid + 2 Fe(II)-[cytochrome b5] + O2 + 2 H(+) = a (9Z,12E)-hexadecadienoyl-containing glycerolipid + 2 Fe(III)-[cytochrome b5] + 2 H2O. Functionally, involved in the biosynthesis of dimorphecolic acid (9-OH-18:2(10E,12E)). Converts oleic acid (18:1(9Z)) into 18:2(9Z,12E) and probably palmitoleic acid (16:1(9Z)) into 16:2(9Z,12E). Very limited ability to catalyze (Z)-delta(12) desaturation. In Dimorphotheca sinuata (African daisy), this protein is Acyl-lipid (9+3)-(E)-desaturase.